A 230-amino-acid polypeptide reads, in one-letter code: Large ribosomal subunit protein uL1 (230 aa).

Belongs to the universal ribosomal protein uL1 family. As to quaternary structure, part of the 50S ribosomal subunit.

Binds directly to 23S rRNA. The L1 stalk is quite mobile in the ribosome, and is involved in E site tRNA release. In terms of biological role, protein L1 is also a translational repressor protein, it controls the translation of the L11 operon by binding to its mRNA. In Aster yellows witches'-broom phytoplasma (strain AYWB), this protein is Large ribosomal subunit protein uL1.